The chain runs to 626 residues: Alpha terpineol synthase, chloroplastic (626 aa).

Residues 1–38 constitute a chloroplast transit peptide; that stretch reads MALLSVAPLASKSRLHKTLITSAHHLKPSPTTIPTLPV. Positions 377, 381, and 529 each coordinate Mg(2+). Residues 377-381 carry the DDXXD motif motif; the sequence is DDIYD.

The protein belongs to the terpene synthase family. Tpsd subfamily. It depends on Mg(2+) as a cofactor. Requires Mn(2+) as cofactor.

It localises to the plastid. It is found in the chloroplast. It catalyses the reaction (2E)-geranyl diphosphate + H2O = (S)-alpha-terpineol + diphosphate. The enzyme catalyses (2E)-geranyl diphosphate + H2O = (R)-alpha-terpineol + diphosphate. It carries out the reaction (2E)-geranyl diphosphate + H2O = (2E)-geraniol + diphosphate. The catalysed reaction is (2E)-geranyl diphosphate = terpinolene + diphosphate. It catalyses the reaction (2E)-geranyl diphosphate = (4S)-limonene + diphosphate. It participates in terpene metabolism; oleoresin biosynthesis. Its pathway is secondary metabolite biosynthesis; terpenoid biosynthesis. Functionally, monoterpene synthase (TPS) involved in the biosynthesis of monoterpene natural products included in conifer oleoresin secretions and volatile emissions; these compounds contribute to biotic and abiotic stress defense against herbivores and pathogens. Catalyzes the conversion of (2E)-geranyl diphosphate (GPP) to (-)-alpha-terpineol, (+)-alpha-terpineol and terpin-4-ol, and, to a lower extent, to geraniol, terpinolene and (-)-limonene. This Pinus banksiana (Jack pine) protein is Alpha terpineol synthase, chloroplastic.